A 441-amino-acid chain; its full sequence is E3 ubiquitin-protein ligase APD1 (441 aa).

2 consecutive transmembrane segments (helical) span residues 60-80 (SNLY…FILI) and 305-325 (IAYV…IQFC). The RING-type zinc finger occupies 390-429 (CAICFDVPRDCFFLPCGHSVSCYECGTTMQEADGSCPICR).

In terms of tissue distribution, expressed in the shoot apical meristems (SAM), root tips and inflorescences, and, at low levels, in floral buds and pollen.

It localises to the endomembrane system. It is found in the vacuole membrane. It carries out the reaction S-ubiquitinyl-[E2 ubiquitin-conjugating enzyme]-L-cysteine + [acceptor protein]-L-lysine = [E2 ubiquitin-conjugating enzyme]-L-cysteine + N(6)-ubiquitinyl-[acceptor protein]-L-lysine.. It functions in the pathway protein modification; protein ubiquitination. Its function is as follows. Involved in pollen mitosis II (PMII) regulation during male gametogenesis. The protein is E3 ubiquitin-protein ligase APD1 of Arabidopsis thaliana (Mouse-ear cress).